The chain runs to 358 residues: Peptide chain release factor 2 (358 aa).

Position 242 is an N5-methylglutamine (glutamine 242).

The protein belongs to the prokaryotic/mitochondrial release factor family. In terms of processing, methylated by PrmC. Methylation increases the termination efficiency of RF2.

The protein resides in the cytoplasm. In terms of biological role, peptide chain release factor 2 directs the termination of translation in response to the peptide chain termination codons UGA and UAA. This Borreliella burgdorferi (strain ATCC 35210 / DSM 4680 / CIP 102532 / B31) (Borrelia burgdorferi) protein is Peptide chain release factor 2 (prfB).